Consider the following 86-residue polypeptide: Small ribosomal subunit protein bS20 (86 aa).

The segment at 1 to 27 is disordered; sequence MANNKSAKKRAIQAEKRRQHNASRRSM.

It belongs to the bacterial ribosomal protein bS20 family.

Functionally, binds directly to 16S ribosomal RNA. This chain is Small ribosomal subunit protein bS20, found in Vibrio vulnificus (strain CMCP6).